A 195-amino-acid polypeptide reads, in one-letter code: Ras-related protein Rab-31 (195 aa).

Positions 16, 18, 19, 20, 21, 32, and 33 each coordinate GTP. Residue Ser20 coordinates Mg(2+). 2 consecutive short sequence motifs (switch) follow at residues 30 to 42 (HFDH…IGAS) and 63 to 79 (AGQE…YRGS). A Phosphoserine modification is found at Ser36. Residues Thr38, Gly64, Asn119, Asp122, Ala150, and Lys151 each contribute to the GTP site. A Mg(2+)-binding site is contributed by Thr38. 2 S-geranylgeranyl cysteine lipidation sites follow: Cys194 and Cys195.

It belongs to the small GTPase superfamily. Rab family. In terms of assembly, interacts with OCRL. Interacts with NGFR. Interacts (in GDP-bound form) with RIN3 and GAPVD1, which function as guanine exchange factors (GEF). Interacts (in GTP-bound form) with EEA1. Interacts with EGFR. Interacts (in GTP-bound form) with APPL2; interaction contributes to or enhances recruitment of APPL2 to the phagosomes; interaction enhances Fc-gamma receptor-mediated phagocytosis through PI3K/Akt signaling in macrophages. Requires Mg(2+) as cofactor. Highest expression in placenta and brain with lower levels in heart and lung. Not detected in liver, skeletal muscle, kidney or pancreas.

It is found in the golgi apparatus. The protein localises to the trans-Golgi network. It localises to the trans-Golgi network membrane. The protein resides in the early endosome. Its subcellular location is the cytoplasmic vesicle. It is found in the phagosome. The protein localises to the phagosome membrane. It carries out the reaction GTP + H2O = GDP + phosphate + H(+). Regulated by guanine nucleotide exchange factors (GEFs) including RIN3 and GAPVD1 which promote the exchange of bound GDP for free GTP. Regulated by GTPase activating proteins (GAPs) which increase the GTP hydrolysis activity. Inhibited by GDP dissociation inhibitors (GDIs) which prevent Rab-GDP dissociation. Its function is as follows. The small GTPases Rab are key regulators of intracellular membrane trafficking, from the formation of transport vesicles to their fusion with membranes. Rabs cycle between an inactive GDP-bound form and an active GTP-bound form that is able to recruit to membranes different set of downstream effectors directly responsible for vesicle formation, movement, tethering and fusion. Required for the integrity and for normal function of the Golgi apparatus and the trans-Golgi network. Plays a role in insulin-stimulated translocation of GLUT4 to the cell membrane. Plays a role in M6PR transport from the trans-Golgi network to endosomes. Plays a role in the internalization of EGFR from the cell membrane into endosomes. Plays a role in the maturation of phagosomes that engulf pathogens, such as S.aureus and M.tuberculosis. The chain is Ras-related protein Rab-31 from Homo sapiens (Human).